The primary structure comprises 489 residues: 6-phosphogluconate dehydrogenase, decarboxylating 1 (489 aa).

Residues 9–14 (GLAVMG) and 32–34 (NRT) contribute to the NADP(+) site. Ser-50 carries the phosphoserine modification. Residues 74–76 (VKA) and Asn-102 each bind NADP(+). Substrate-binding positions include Asn-102 and 128–130 (SGG). Lys-182 serves as the catalytic Proton acceptor. 185–186 (HN) lines the substrate pocket. The Proton donor role is filled by Glu-189. Positions 190, 259, 286, 446, and 452 each coordinate substrate.

The protein belongs to the 6-phosphogluconate dehydrogenase family. As to quaternary structure, homodimer.

Its subcellular location is the cytoplasm. It carries out the reaction 6-phospho-D-gluconate + NADP(+) = D-ribulose 5-phosphate + CO2 + NADPH. Its pathway is carbohydrate degradation; pentose phosphate pathway; D-ribulose 5-phosphate from D-glucose 6-phosphate (oxidative stage): step 3/3. In terms of biological role, catalyzes the oxidative decarboxylation of 6-phosphogluconate to ribulose 5-phosphate and CO(2), with concomitant reduction of NADP to NADPH. The protein is 6-phosphogluconate dehydrogenase, decarboxylating 1 (GND1) of Saccharomyces cerevisiae (strain ATCC 204508 / S288c) (Baker's yeast).